We begin with the raw amino-acid sequence, 276 residues long: Thymidylate synthase (276 aa).

Arginine 26 serves as a coordination point for dUMP. Histidine 56 serves as a coordination point for (6R)-5,10-methylene-5,6,7,8-tetrahydrofolate. 131 to 132 (RR) is a dUMP binding site. The Nucleophile role is filled by cysteine 151. DUMP-binding positions include 178–181 (RSAD), asparagine 189, and 219–221 (HIY). Aspartate 181 is a (6R)-5,10-methylene-5,6,7,8-tetrahydrofolate binding site. Alanine 275 lines the (6R)-5,10-methylene-5,6,7,8-tetrahydrofolate pocket.

Belongs to the thymidylate synthase family. Bacterial-type ThyA subfamily. Homodimer.

The protein localises to the cytoplasm. The catalysed reaction is dUMP + (6R)-5,10-methylene-5,6,7,8-tetrahydrofolate = 7,8-dihydrofolate + dTMP. Its pathway is pyrimidine metabolism; dTTP biosynthesis. Its function is as follows. Catalyzes the reductive methylation of 2'-deoxyuridine-5'-monophosphate (dUMP) to 2'-deoxythymidine-5'-monophosphate (dTMP) while utilizing 5,10-methylenetetrahydrofolate (mTHF) as the methyl donor and reductant in the reaction, yielding dihydrofolate (DHF) as a by-product. This enzymatic reaction provides an intracellular de novo source of dTMP, an essential precursor for DNA biosynthesis. The polypeptide is Thymidylate synthase (Polaromonas naphthalenivorans (strain CJ2)).